We begin with the raw amino-acid sequence, 743 residues long: Extensin-2 (743 aa).

The first 22 residues, 1–22, serve as a signal peptide directing secretion; it reads MGPSAHLISALGVIIMATMVAA. The interval 46 to 93 is disordered; sequence TPPLPYVDSSPPPTYTPAPEVEYKSPPPPYVYSSPPPPTYSPSPKVDY. Pro residues-rich tracts occupy residues 47–61 and 70–86; these read PPLP…PTYT and SPPP…PTYS. Tandem repeats lie at residues 70–78, 79–94, 95–103, 104–119, 120–128, 129–144, 145–153, 154–169, 170–178, 179–194, 195–203, 204–219, 220–228, 229–244, 245–253, 254–269, 270–278, 279–294, 295–303, 304–319, 320–328, 329–344, 345–353, 354–369, 370–378, 379–394, 395–403, 404–419, 420–428, 429–444, 445–453, 454–469, 470–478, 479–494, 495–503, 504–519, 520–528, 529–544, 545–553, 554–569, 570–578, 579–594, 595–603, 604–619, 620–628, 629–644, and 645–660. The tract at residues 70–628 is 23 X 9 AA repeats of S-P-P-P-P-Y-V-Y-[SN]; it reads SPPPPYVYSS…KSPPPPYVYS (559 aa). The 24 X 16 AA repeats of S-P-P-P-P-[YT]-Y-S-P-S-P-K-V-[DEYH]-Y-K stretch occupies residues 79–660; that stretch reads SPPPPTYSPS…YSPSPKVYYK (582 aa). The interval 715–743 is disordered; that stretch reads PPSYYSPSPKVEYKSPPPPSYSPSPKTEY.

It belongs to the extensin family. Post-translationally, extensins contain a characteristic repeat of the pentapeptide Ser-Pro(4). The proline residues are hydroxylated and then O-glycosylated (arabinosylation). In terms of processing, synthetised as soluble proteins which become insolubilised in the cell wall through the intermolecular cross-linking of Tyr on adjacent monomers. Isodityrosine (IDT) stabilizes and makes rigid the part of the polypeptide where IDT functional sites are present. Predominantly expressed in the roots.

The protein resides in the secreted. It is found in the primary cell wall. Functionally, structural component which strengthens the primary cell wall. The protein is Extensin-2 of Arabidopsis thaliana (Mouse-ear cress).